Here is a 348-residue protein sequence, read N- to C-terminus: Lipoyl synthase (348 aa).

Positions 55, 60, 66, 81, 85, 88, and 292 each coordinate [4Fe-4S] cluster. Residues 67–281 (WESREATFLI…SDEAYEIGFA (215 aa)) enclose the Radical SAM core domain.

This sequence belongs to the radical SAM superfamily. Lipoyl synthase family. Requires [4Fe-4S] cluster as cofactor.

It localises to the cytoplasm. It carries out the reaction [[Fe-S] cluster scaffold protein carrying a second [4Fe-4S](2+) cluster] + N(6)-octanoyl-L-lysyl-[protein] + 2 oxidized [2Fe-2S]-[ferredoxin] + 2 S-adenosyl-L-methionine + 4 H(+) = [[Fe-S] cluster scaffold protein] + N(6)-[(R)-dihydrolipoyl]-L-lysyl-[protein] + 4 Fe(3+) + 2 hydrogen sulfide + 2 5'-deoxyadenosine + 2 L-methionine + 2 reduced [2Fe-2S]-[ferredoxin]. The protein operates within protein modification; protein lipoylation via endogenous pathway; protein N(6)-(lipoyl)lysine from octanoyl-[acyl-carrier-protein]: step 2/2. Its function is as follows. Catalyzes the radical-mediated insertion of two sulfur atoms into the C-6 and C-8 positions of the octanoyl moiety bound to the lipoyl domains of lipoate-dependent enzymes, thereby converting the octanoylated domains into lipoylated derivatives. The sequence is that of Lipoyl synthase from Corynebacterium efficiens (strain DSM 44549 / YS-314 / AJ 12310 / JCM 11189 / NBRC 100395).